Consider the following 78-residue polypeptide: uncharacterized protein (78 aa).

The next 2 membrane-spanning stretches (helical) occupy residues 13 to 35 (AGVG…PTGI) and 50 to 72 (GTTF…FYYF).

Its subcellular location is the cell membrane. This is an uncharacterized protein from Pasteurella multocida (strain Pm70).